Here is a 128-residue protein sequence, read N- to C-terminus: Ribonuclease P protein component (128 aa).

It belongs to the RnpA family. Consists of a catalytic RNA component (M1 or rnpB) and a protein subunit.

It catalyses the reaction Endonucleolytic cleavage of RNA, removing 5'-extranucleotides from tRNA precursor.. RNaseP catalyzes the removal of the 5'-leader sequence from pre-tRNA to produce the mature 5'-terminus. It can also cleave other RNA substrates such as 4.5S RNA. The protein component plays an auxiliary but essential role in vivo by binding to the 5'-leader sequence and broadening the substrate specificity of the ribozyme. The polypeptide is Ribonuclease P protein component (Prochlorococcus marinus (strain MIT 9312)).